A 1777-amino-acid polypeptide reads, in one-letter code: Non-reducing polyketide synthase nscA (1777 aa).

An N-terminal acylcarrier protein transacylase domain (SAT) region spans residues 27–261; that stretch reads DLFRRLDQHS…PLPVYDGLCH (235 aa). The region spanning 396–829 is the Ketosynthase family 3 (KS3) domain; the sequence is SSKLAIVGMA…GGNTTLLLED (434 aa). Catalysis depends on for beta-ketoacyl synthase activity residues Cys-569, His-704, and His-747. The malonyl-CoA:ACP transacylase (MAT) domain stretch occupies residues 934-1212; that stretch reads AFTGQGAYYH…SAIPSCRRNE (279 aa). Residues 1297-1616 are product template (PT) domain; that stretch reads TSLVHQITAE…RLLMDRFFSP (320 aa). Residues 1301-1437 are N-terminal hotdog fold; sequence HQITAETVEA…ATIRFEDPEA (137 aa). The 311-residue stretch at 1301 to 1611 folds into the PKS/mFAS DH domain; the sequence is HQITAETVEA…FRRVPRLLMD (311 aa). His-1333 (proton acceptor; for dehydratase activity) is an active-site residue. The tract at residues 1465–1611 is C-terminal hotdog fold; that stretch reads ASRLSKPLAY…FRRVPRLLMD (147 aa). Residue Asp-1522 is the Proton donor; for dehydratase activity of the active site. Residues 1674–1704 form a disordered region; that stretch reads LLATSSKSSTPKESPIVTPAESERAEPVDNS. Over residues 1677–1688 the composition is skewed to low complexity; sequence TSSKSSTPKESP. The Carrier domain occupies 1700–1777; sequence PVDNSMTSQC…EMTAWIEEYC (78 aa). Ser-1737 carries the post-translational modification O-(pantetheine 4'-phosphoryl)serine.

Pantetheine 4'-phosphate serves as cofactor.

It functions in the pathway secondary metabolite biosynthesis. In terms of biological role, non-reducing polyketide synthase; part of the gene cluster that mediates the biosynthesis of neosartoricin B, a prenylated anthracenone that probably exhibits T-cell antiproliferative activity, suggestive of a physiological role as an immunosuppressive agent. The non-reducing polyketide synthase nscA probably synthesizes and cyclizes the decaketide backbone. The hydrolase nscB then mediates the product release through hydrolysis followed by spontaneous decarboxylation. The prenyltransferase nscD catalyzes the addition of the dimethylallyl group to the aromatic C5. The FAD-dependent monooxygenase nscC is then responsible for the stereospecific hydroxylation at C2. Neosartoricin B can be converted into two additional compounds neosartoricins C and D. Neosartoricin C is a spirocyclic compound that is cyclized through the attack of C3 hydroxyl on C14, followed by dehydration. On the other hand, neosartoricin D is a further cyclized compound in which attack of C2 on C14 in neosartoricin C results in the formation of the acetal-containing dioxabicyclo-octanone ring. Both of these compounds are novel and possibly represent related metabolites of the gene cluster. This is Non-reducing polyketide synthase nscA from Trichophyton equinum (strain ATCC MYA-4606 / CBS 127.97) (Horse ringworm fungus).